The following is a 694-amino-acid chain: Phosphatase and actin regulator 4-A (694 aa).

2 stretches are compositionally biased toward basic and acidic residues: residues 1-13 (MEDR…DHSE) and 46-72 (SSDS…ELIK). Disordered stretches follow at residues 1-29 (MEDR…KSKF), 42-169 (RKRK…QPLP), 192-403 (VNEV…HIRI), 426-445 (LFMQ…RSLP), and 450-572 (LLKV…QIRQ). The RPEL 1 repeat unit spans residues 55–80 (EVLERKISTRKPREELIKRGLLVEVP). Residues 240–267 (SISTSVTQESAVAGQKSDSSNRLQSSAP) show a composition bias toward polar residues. Residues 300–317 (AELSLALAGSPLSPAGSR) are compositionally biased toward low complexity. Composition is skewed to pro residues over residues 318–327 (PSPPLPPKRA) and 372–381 (SNPPVPPLTL). Composition is skewed to acidic residues over residues 455 to 467 (DDED…DESL), 499 to 511 (QEEE…DTDS), and 519 to 529 (DDEEEEEEEET). RPEL repeat units lie at residues 576 to 601 (TQLN…QKNE) and 613 to 638 (RRLT…RFNE).

It belongs to the phosphatase and actin regulator family. In terms of assembly, binds ppp1ca and actin.

Its subcellular location is the cytoplasm. It localises to the cell projection. It is found in the lamellipodium. Regulator of protein phosphatase 1 (PP1) required for neural tube and optic fissure closure, and enteric neural crest cell (ENCCs) migration during development. Acts as an activator of PP1. During neural tube closure, localizes to the ventral neural tube and activates PP1, leading to down-regulate cell proliferation within cranial neural tissue and the neural retina. Also acts as a regulator of migration of enteric neural crest cells (ENCCs) by activating PP1, leading to repression of the integrin signaling through the rho/rock pathway. The polypeptide is Phosphatase and actin regulator 4-A (phactr4-a) (Xenopus laevis (African clawed frog)).